Here is a 427-residue protein sequence, read N- to C-terminus: 3-deoxy-D-manno-octulosonic acid transferase (427 aa).

The helical; Signal-anchor transmembrane segment at 4-24 (FFYTSLLLICQPLILCFIGLL) threads the bilayer. Glu-62 functions as the Proton acceptor in the catalytic mechanism. CMP-binding positions include 270 to 271 (PR), 311 to 313 (MGE), and 337 to 340 (NPLE).

The protein belongs to the glycosyltransferase group 1 family. Glycosyltransferase 30 subfamily.

It is found in the cell inner membrane. The catalysed reaction is lipid IVA (E. coli) + CMP-3-deoxy-beta-D-manno-octulosonate = alpha-Kdo-(2-&gt;6)-lipid IVA (E. coli) + CMP + H(+). It functions in the pathway bacterial outer membrane biogenesis; LPS core biosynthesis. Functionally, involved in lipopolysaccharide (LPS) biosynthesis. Catalyzes the transfer of a single 3-deoxy-D-manno-octulosonate (Kdo) residue from CMP-Kdo to lipid IV(A), the tetraacyldisaccharide-1,4'-bisphosphate precursor of lipid A. Is strictly monofunctional, i.e. is capable of adding only a single Kdo residue to the acceptor lipid. This chain is 3-deoxy-D-manno-octulosonic acid transferase (waaA), found in Haemophilus influenzae (strain ATCC 51907 / DSM 11121 / KW20 / Rd).